The chain runs to 312 residues: NADH-ubiquinone oxidoreductase chain 1 (312 aa).

8 consecutive transmembrane segments (helical) span residues 3 to 23 (FILSLIGSLLLIICVLVSVAF), 77 to 97 (ISPIFSLFLSLFVWMCMPFFV), 104 to 124 (LGGLFFLCCTSLGVYTVMVAG), 150 to 170 (LALILLSFVFLIGSYNMVYFF), 174 to 194 (IYVWFLIILFPMALVWLTISL), 226 to 246 (LIFMAEYASILFMSMLFCVIF), 250 to 270 (DVFNLLFYVKLTFISFIFIWA), and 289 to 309 (CFLSFSLNYLLFFIGFKILLF).

This sequence belongs to the complex I subunit 1 family.

It is found in the mitochondrion inner membrane. It catalyses the reaction a ubiquinone + NADH + 5 H(+)(in) = a ubiquinol + NAD(+) + 4 H(+)(out). Functionally, core subunit of the mitochondrial membrane respiratory chain NADH dehydrogenase (Complex I) that is believed to belong to the minimal assembly required for catalysis. Complex I functions in the transfer of electrons from NADH to the respiratory chain. The immediate electron acceptor for the enzyme is believed to be ubiquinone. This is NADH-ubiquinone oxidoreductase chain 1 (mt:ND1) from Drosophila subobscura (Fruit fly).